Here is a 518-residue protein sequence, read N- to C-terminus: ATP synthase subunit alpha (518 aa).

An ATP-binding site is contributed by 169–176 (GDRKTGKT).

This sequence belongs to the ATPase alpha/beta chains family. As to quaternary structure, F-type ATPases have 2 components, CF(1) - the catalytic core - and CF(0) - the membrane proton channel. CF(1) has five subunits: alpha(3), beta(3), gamma(1), delta(1), epsilon(1). CF(0) has three main subunits: a(1), b(2) and c(9-12). The alpha and beta chains form an alternating ring which encloses part of the gamma chain. CF(1) is attached to CF(0) by a central stalk formed by the gamma and epsilon chains, while a peripheral stalk is formed by the delta and b chains.

It is found in the cell membrane. It catalyses the reaction ATP + H2O + 4 H(+)(in) = ADP + phosphate + 5 H(+)(out). In terms of biological role, produces ATP from ADP in the presence of a proton gradient across the membrane. The alpha chain is a regulatory subunit. This chain is ATP synthase subunit alpha, found in Enterococcus hirae (strain ATCC 9790 / DSM 20160 / JCM 8729 / LMG 6399 / NBRC 3181 / NCIMB 6459 / NCDO 1258 / NCTC 12367 / WDCM 00089 / R).